The following is a 419-amino-acid chain: Probable glycosidase C21B10.07 (419 aa).

Disordered stretches follow at residues 1–20 (MGIP…AALS) and 29–67 (DPAR…NNEN). Positions 30–59 (PARKNESTNDVIDNHTDTEIDDHDNDHENL) are enriched in basic and acidic residues. The chain crosses the membrane as a helical span at residues 88–108 (FIWILIFIVALICSVLIGVLG). Residues 122-387 (PSYKAKTYSL…WAGSSVYSSA (266 aa)) form the GH16 domain. The Nucleophile role is filled by E237. Residue E242 is the Proton donor of the active site.

Belongs to the glycosyl hydrolase 16 family.

It localises to the membrane. This is Probable glycosidase C21B10.07 from Schizosaccharomyces pombe (strain 972 / ATCC 24843) (Fission yeast).